The sequence spans 228 residues: Translin (228 aa).

The DNA/RNA binding stretch occupies residues 86–90; the sequence is RFHEH. Residues 177–198 form a leucine-zipper region; it reads LDSGFRLLNLKNDSLRKRYDGL. Position 187 is an N6-acetyllysine (lysine 187). Serine 190 carries the phosphoserine modification. The residue at position 199 (lysine 199) is an N6-acetyllysine.

It belongs to the translin family. Ring-shaped heterooctamer of six TSN and two TSNAX subunits, DNA/RNA binding occurs inside the ring.

The protein localises to the cytoplasm. It is found in the nucleus. DNA-binding protein that specifically recognizes consensus sequences at the breakpoint junctions in chromosomal translocations, mostly involving immunoglobulin (Ig)/T-cell receptor gene segments. Seems to recognize single-stranded DNA ends generated by staggered breaks occurring at recombination hot spots. Its function is as follows. Exhibits both single-stranded and double-stranded endoribonuclease activity. May act as an activator of RNA-induced silencing complex (RISC) by facilitating endonucleolytic cleavage of the siRNA passenger strand. This chain is Translin (TSN), found in Bos taurus (Bovine).